We begin with the raw amino-acid sequence, 361 residues long: Phosphoserine aminotransferase (361 aa).

R43 is a binding site for L-glutamate. Pyridoxal 5'-phosphate is bound by residues 77-78 (AS), W103, T152, D172, and Q195. Position 196 is an N6-(pyridoxal phosphate)lysine (K196). 237-238 (NT) contacts pyridoxal 5'-phosphate.

The protein belongs to the class-V pyridoxal-phosphate-dependent aminotransferase family. SerC subfamily. As to quaternary structure, homodimer. The cofactor is pyridoxal 5'-phosphate.

It is found in the cytoplasm. The catalysed reaction is O-phospho-L-serine + 2-oxoglutarate = 3-phosphooxypyruvate + L-glutamate. It carries out the reaction 4-(phosphooxy)-L-threonine + 2-oxoglutarate = (R)-3-hydroxy-2-oxo-4-phosphooxybutanoate + L-glutamate. Its pathway is amino-acid biosynthesis; L-serine biosynthesis; L-serine from 3-phospho-D-glycerate: step 2/3. It participates in cofactor biosynthesis; pyridoxine 5'-phosphate biosynthesis; pyridoxine 5'-phosphate from D-erythrose 4-phosphate: step 3/5. Its function is as follows. Catalyzes the reversible conversion of 3-phosphohydroxypyruvate to phosphoserine and of 3-hydroxy-2-oxo-4-phosphonooxybutanoate to phosphohydroxythreonine. This is Phosphoserine aminotransferase from Desulfatibacillum aliphaticivorans.